The primary structure comprises 181 residues: Adenylate kinase (181 aa).

Position 10–15 (10–15 (GAGKGT)) interacts with ATP. Residues 30-59 (STGDLFRDNITNETELGVEAKRYLDAGDLV) form an NMP region. Residues Thr31, Arg36, 57–59 (DLV), 85–88 (GYPR), and Gln92 contribute to the AMP site. An LID region spans residues 126 to 132 (GRGRADD). An ATP-binding site is contributed by Arg127. Positions 129 and 140 each coordinate AMP. ATP is bound at residue Gly166.

Belongs to the adenylate kinase family. In terms of assembly, monomer.

The protein localises to the cytoplasm. It carries out the reaction AMP + ATP = 2 ADP. It functions in the pathway purine metabolism; AMP biosynthesis via salvage pathway; AMP from ADP: step 1/1. In terms of biological role, catalyzes the reversible transfer of the terminal phosphate group between ATP and AMP. Plays an important role in cellular energy homeostasis and in adenine nucleotide metabolism. This Mycobacterium sp. (strain MCS) protein is Adenylate kinase.